We begin with the raw amino-acid sequence, 117 residues long: Putative membrane protein insertion efficiency factor (117 aa).

Belongs to the UPF0161 family.

It localises to the cell inner membrane. Its function is as follows. Could be involved in insertion of integral membrane proteins into the membrane. This is Putative membrane protein insertion efficiency factor from Bartonella quintana (strain Toulouse) (Rochalimaea quintana).